The sequence spans 249 residues: Glucosamine-6-phosphate deaminase (249 aa).

The active-site Proton acceptor; for enolization step is the Asp-67. The active-site For ring-opening step is Asn-136. His-138 acts as the Proton acceptor; for ring-opening step in catalysis. Glu-143 functions as the For ring-opening step in the catalytic mechanism.

It belongs to the glucosamine/galactosamine-6-phosphate isomerase family. NagB subfamily.

It catalyses the reaction alpha-D-glucosamine 6-phosphate + H2O = beta-D-fructose 6-phosphate + NH4(+). It functions in the pathway amino-sugar metabolism; N-acetylneuraminate degradation; D-fructose 6-phosphate from N-acetylneuraminate: step 5/5. Catalyzes the reversible isomerization-deamination of glucosamine 6-phosphate (GlcN6P) to form fructose 6-phosphate (Fru6P) and ammonium ion. In Clostridioides difficile (strain 630) (Peptoclostridium difficile), this protein is Glucosamine-6-phosphate deaminase.